We begin with the raw amino-acid sequence, 571 residues long: Urease subunit alpha (571 aa).

The Urease domain occupies 133–571 (GGIDTHVHFI…LPLTQRYFLF (439 aa)). Ni(2+) is bound by residues His138, His140, and Lys221. Lys221 is modified (N6-carboxylysine). Substrate is bound at residue His223. The Ni(2+) site is built by His250 and His276. His324 functions as the Proton donor in the catalytic mechanism. Asp364 provides a ligand contact to Ni(2+).

This sequence belongs to the metallo-dependent hydrolases superfamily. Urease alpha subunit family. In terms of assembly, heterotrimer of UreA (gamma), UreB (beta) and UreC (alpha) subunits. Three heterotrimers associate to form the active enzyme. It depends on Ni cation as a cofactor. In terms of processing, carboxylation allows a single lysine to coordinate two nickel ions.

The protein resides in the cytoplasm. The enzyme catalyses urea + 2 H2O + H(+) = hydrogencarbonate + 2 NH4(+). The protein operates within nitrogen metabolism; urea degradation; CO(2) and NH(3) from urea (urease route): step 1/1. This chain is Urease subunit alpha, found in Staphylococcus aureus (strain USA300).